The following is a 147-amino-acid chain: Hemoglobin subunit beta (147 aa).

Residues 3–147 (EWTDDERAII…VVSALGRQYH (145 aa)) enclose the Globin domain. Heme b is bound by residues His64 and His93.

This sequence belongs to the globin family. As to quaternary structure, heterotetramer of two alpha chains and two beta chains. Red blood cells.

Functionally, involved in oxygen transport from gills to the various peripheral tissues. This chain is Hemoglobin subunit beta (hbb), found in Merlangius merlangus (Whiting).